The chain runs to 363 residues: 3-isopropylmalate dehydrogenase (363 aa).

NAD(+) is bound at residue 78–91 (XXXXXXXXXXXXXX). Residues R99, R109, R138, and D227 each coordinate substrate. Mg(2+) contacts are provided by D227, D251, and D255. Residue 285–297 (GSAPDIEGKNIAN) participates in NAD(+) binding.

Belongs to the isocitrate and isopropylmalate dehydrogenases family. LeuB type 1 subfamily. Homodimer. It depends on Mg(2+) as a cofactor. Mn(2+) is required as a cofactor.

The protein localises to the cytoplasm. The enzyme catalyses (2R,3S)-3-isopropylmalate + NAD(+) = 4-methyl-2-oxopentanoate + CO2 + NADH. It participates in amino-acid biosynthesis; L-leucine biosynthesis; L-leucine from 3-methyl-2-oxobutanoate: step 3/4. Its function is as follows. Catalyzes the oxidation of 3-carboxy-2-hydroxy-4-methylpentanoate (3-isopropylmalate) to 3-carboxy-4-methyl-2-oxopentanoate. The product decarboxylates to 4-methyl-2 oxopentanoate. This chain is 3-isopropylmalate dehydrogenase, found in Buchnera aphidicola subsp. Uroleucon solidaginis.